Consider the following 85-residue polypeptide: Acylphosphatase (85 aa).

An Acylphosphatase-like domain is found at 3–85; it reads AARFVVSGVV…PARFRRLKTL (83 aa). Catalysis depends on residues R18 and N36. Residues 66 to 85 are disordered; that stretch reads PPRSRRSRARPARFRRLKTL.

This sequence belongs to the acylphosphatase family.

It carries out the reaction an acyl phosphate + H2O = a carboxylate + phosphate + H(+). In Xanthomonas axonopodis pv. citri (strain 306), this protein is Acylphosphatase (acyP).